Reading from the N-terminus, the 479-residue chain is Leucine-rich repeat-containing protein 74A (479 aa).

Over residues 1 to 10 (MDDDDIEPLE) the composition is skewed to acidic residues. Residues 1–29 (MDDDDIEPLEYETKDETEAALAPQSSEDT) form a disordered region. 8 LRR repeats span residues 119–140 (TVLK…SLME), 147–167 (YLQE…RIIS), 176–197 (SLWK…LLCQ), 204–225 (RIRS…YLGQ), 232–253 (GLQS…ALCN), 260–281 (TLKK…ALGD), 288–309 (CLVY…RISK), and 316–336 (CLQV…YSLI).

In Rattus norvegicus (Rat), this protein is Leucine-rich repeat-containing protein 74A.